The chain runs to 532 residues: Phosphoenolpyruvate carboxykinase (ATP) (532 aa).

3 residues coordinate substrate: Arg-60, Tyr-194, and Lys-200. Residues Lys-200, His-219, and 237 to 245 each bind ATP; that span reads GLSGTGKTT. Mn(2+)-binding residues include Lys-200 and His-219. Asp-258 contributes to the Mn(2+) binding site. Residues Glu-286, Arg-324, and Thr-449 each coordinate ATP. Arg-324 provides a ligand contact to substrate.

This sequence belongs to the phosphoenolpyruvate carboxykinase (ATP) family. It depends on Mn(2+) as a cofactor.

The protein localises to the cytoplasm. The catalysed reaction is oxaloacetate + ATP = phosphoenolpyruvate + ADP + CO2. It functions in the pathway carbohydrate biosynthesis; gluconeogenesis. Involved in the gluconeogenesis. Catalyzes the conversion of oxaloacetate (OAA) to phosphoenolpyruvate (PEP) through direct phosphoryl transfer between the nucleoside triphosphate and OAA. The protein is Phosphoenolpyruvate carboxykinase (ATP) of Cereibacter sphaeroides (strain ATCC 17029 / ATH 2.4.9) (Rhodobacter sphaeroides).